We begin with the raw amino-acid sequence, 356 residues long: HTH-type transcriptional regulator AglR (356 aa).

Positions 1–57 (MPVNLKQLAELLGLSQTTVSRALNGYPEVNAETRARVLEAVRETGYRPNRAAQRLAT) constitute an HTH lacI-type domain. The H-T-H motif DNA-binding region spans 5–24 (LKQLAELLGLSQTTVSRALN). Residues 337-356 (TGPAPDRSPLPNPSPQVGGA) are disordered.

Functionally, probable regulatory protein for the binding-protein-dependent transport system for alpha-glucosides such as sucrose, maltose and trehalose. The polypeptide is HTH-type transcriptional regulator AglR (aglR) (Rhizobium meliloti (strain 1021) (Ensifer meliloti)).